A 123-amino-acid chain; its full sequence is Small ribosomal subunit protein uS13c (123 aa).

Positions 99–123 (GQRTRSNARTRRGAKKTVAGKKLAK) are disordered. A compositionally biased stretch (basic residues) spans 100–123 (QRTRSNARTRRGAKKTVAGKKLAK).

It belongs to the universal ribosomal protein uS13 family. Part of the 30S ribosomal subunit.

It localises to the plastid. Its subcellular location is the chloroplast. Located at the top of the head of the 30S subunit, it contacts several helices of the 16S rRNA. This chain is Small ribosomal subunit protein uS13c, found in Cyanidioschyzon merolae (strain NIES-3377 / 10D) (Unicellular red alga).